The chain runs to 319 residues: tRNA dimethylallyltransferase (319 aa).

26–33 (GPTAAGKS) serves as a coordination point for ATP. 28-33 (TAAGKS) is a binding site for substrate. Residues 51–54 (DSMQ) form an interaction with substrate tRNA region.

This sequence belongs to the IPP transferase family. In terms of assembly, monomer. Requires Mg(2+) as cofactor.

The catalysed reaction is adenosine(37) in tRNA + dimethylallyl diphosphate = N(6)-dimethylallyladenosine(37) in tRNA + diphosphate. Its function is as follows. Catalyzes the transfer of a dimethylallyl group onto the adenine at position 37 in tRNAs that read codons beginning with uridine, leading to the formation of N6-(dimethylallyl)adenosine (i(6)A). The sequence is that of tRNA dimethylallyltransferase from Salinispora tropica (strain ATCC BAA-916 / DSM 44818 / JCM 13857 / NBRC 105044 / CNB-440).